Here is a 140-residue protein sequence, read N- to C-terminus: Transcription antitermination protein NusB (140 aa).

It belongs to the NusB family.

Functionally, involved in transcription antitermination. Required for transcription of ribosomal RNA (rRNA) genes. Binds specifically to the boxA antiterminator sequence of the ribosomal RNA (rrn) operons. This Streptococcus pneumoniae (strain JJA) protein is Transcription antitermination protein NusB.